The primary structure comprises 157 residues: Phosphopantetheine adenylyltransferase (157 aa).

It belongs to the eukaryotic CoaD family. In terms of assembly, monomer.

It localises to the cytoplasm. The catalysed reaction is (R)-4'-phosphopantetheine + ATP + H(+) = 3'-dephospho-CoA + diphosphate. Its pathway is cofactor biosynthesis; coenzyme A biosynthesis. Functionally, reversibly transfers an adenylyl group from ATP to 4'-phosphopantetheine, yielding dephospho-CoA (dPCoA) and pyrophosphate. This chain is Phosphopantetheine adenylyltransferase, found in Pyrococcus abyssi (strain GE5 / Orsay).